Consider the following 368-residue polypeptide: GTPase Obg (368 aa).

The 161-residue stretch at methionine 1–leucine 161 folds into the Obg domain. In terms of domain architecture, OBG-type G spans alanine 162–aspartate 337. Residues glycine 168–serine 175, phenylalanine 193–isoleucine 197, aspartate 217–glycine 220, asparagine 290–aspartate 293, and serine 318–leucine 320 contribute to the GTP site. Mg(2+)-binding residues include serine 175 and threonine 195.

It belongs to the TRAFAC class OBG-HflX-like GTPase superfamily. OBG GTPase family. As to quaternary structure, monomer. The cofactor is Mg(2+).

The protein localises to the cytoplasm. Functionally, an essential GTPase which binds GTP, GDP and possibly (p)ppGpp with moderate affinity, with high nucleotide exchange rates and a fairly low GTP hydrolysis rate. Plays a role in control of the cell cycle, stress response, ribosome biogenesis and in those bacteria that undergo differentiation, in morphogenesis control. The protein is GTPase Obg of Nitratidesulfovibrio vulgaris (strain DSM 19637 / Miyazaki F) (Desulfovibrio vulgaris).